Consider the following 488-residue polypeptide: MKILMRADTHVSYSVPAEGTKANFTFSQVLAALSVSLCSLVVGFVSAYTSPALVSMTDRTITSFEVTKDAGSWVGGIMPLAALAGGITGGPLIEYLGRRNTILATAVPFIVSSLLIACAVNVIMILCGRFLTGFCVGIASLSLPVYLGETLQPEVRGTLGLLPTALGNIGILVCYVAGSFMNWSILAFLGAALPVPFLILMIIIPETPRWFVNRGQEERARKALKWLRGKEADVEPELKDLMQSQAEADSQATRNTCLELFKRINLKPLSISLGLMFFQQFSGINAVIFYTVQIFKDAGSTIDSNLCTIIVGIVNFFATFMGIILIDRLGRKILLYVSDIAMILTLSILGGFFYCKAHGPDVSHLGWLPLSCFVIYILGFSLGFGPIPWLMMGEILPAKIRGPAASVVTAFNWFCTFVVTKTFQDLTVAMGPHGAFWLFGVVCIVGLFFVIIYVPETRGKSLEEIERKMMGRVPISAVVNIKPFSFNM.

The Cytoplasmic segment spans residues 1–28 (MKILMRADTHVSYSVPAEGTKANFTFSQ). The chain crosses the membrane as a helical span at residues 29 to 49 (VLAALSVSLCSLVVGFVSAYT). Over 50 to 72 (SPALVSMTDRTITSFEVTKDAGS) the chain is Extracellular. The helical transmembrane segment at 73–93 (WVGGIMPLAALAGGITGGPLI) threads the bilayer. Topologically, residues 94–105 (EYLGRRNTILAT) are cytoplasmic. A helical transmembrane segment spans residues 106–126 (AVPFIVSSLLIACAVNVIMIL). The Extracellular segment spans residues 127–129 (CGR). A helical transmembrane segment spans residues 130–150 (FLTGFCVGIASLSLPVYLGET). Over 151–160 (LQPEVRGTLG) the chain is Cytoplasmic. Residues 161-181 (LLPTALGNIGILVCYVAGSFM) form a helical membrane-spanning segment. The N-linked (GlcNAc...) asparagine glycan is linked to Asn182. At 182–184 (NWS) the chain is on the extracellular side. Residues 185–205 (ILAFLGAALPVPFLILMIIIP) traverse the membrane as a helical segment. Residues 206-268 (ETPRWFVNRG…ELFKRINLKP (63 aa)) are Cytoplasmic-facing. Residues 269–289 (LSISLGLMFFQQFSGINAVIF) traverse the membrane as a helical segment. Residues 290–305 (YTVQIFKDAGSTIDSN) are Extracellular-facing. A helical transmembrane segment spans residues 306 to 326 (LCTIIVGIVNFFATFMGIILI). At 327 to 332 (DRLGRK) the chain is on the cytoplasmic side. A helical membrane pass occupies residues 333–353 (ILLYVSDIAMILTLSILGGFF). At 354–372 (YCKAHGPDVSHLGWLPLSC) the chain is on the extracellular side. The chain crosses the membrane as a helical span at residues 373 to 393 (FVIYILGFSLGFGPIPWLMMG). Residues 394-402 (EILPAKIRG) lie on the Cytoplasmic side of the membrane. Residues 403–423 (PAASVVTAFNWFCTFVVTKTF) form a helical membrane-spanning segment. Topologically, residues 424 to 433 (QDLTVAMGPH) are extracellular. A helical transmembrane segment spans residues 434 to 454 (GAFWLFGVVCIVGLFFVIIYV). The Cytoplasmic segment spans residues 455–488 (PETRGKSLEEIERKMMGRVPISAVVNIKPFSFNM).

Belongs to the major facilitator superfamily. Sugar transporter (TC 2.A.1.1) family. Trehalose transporter subfamily.

Its subcellular location is the cell membrane. Functionally, fails to transport trehalose. The sequence is that of Facilitated trehalose transporter Tret1-2 homolog from Drosophila sechellia (Fruit fly).